The primary structure comprises 238 residues: UDP-2,3-diacylglucosamine hydrolase (238 aa).

Positions 8, 10, 41, 78, and 113 each coordinate Mn(2+). 78-79 is a substrate binding site; the sequence is NR. Substrate-binding residues include Asp121, Ser159, Asn163, Lys166, and His194. Residues His194 and His196 each contribute to the Mn(2+) site.

Belongs to the LpxH family. Mn(2+) serves as cofactor.

Its subcellular location is the cell inner membrane. The catalysed reaction is UDP-2-N,3-O-bis[(3R)-3-hydroxytetradecanoyl]-alpha-D-glucosamine + H2O = 2-N,3-O-bis[(3R)-3-hydroxytetradecanoyl]-alpha-D-glucosaminyl 1-phosphate + UMP + 2 H(+). Its pathway is glycolipid biosynthesis; lipid IV(A) biosynthesis; lipid IV(A) from (3R)-3-hydroxytetradecanoyl-[acyl-carrier-protein] and UDP-N-acetyl-alpha-D-glucosamine: step 4/6. Hydrolyzes the pyrophosphate bond of UDP-2,3-diacylglucosamine to yield 2,3-diacylglucosamine 1-phosphate (lipid X) and UMP by catalyzing the attack of water at the alpha-P atom. Involved in the biosynthesis of lipid A, a phosphorylated glycolipid that anchors the lipopolysaccharide to the outer membrane of the cell. This chain is UDP-2,3-diacylglucosamine hydrolase, found in Shewanella halifaxensis (strain HAW-EB4).